Reading from the N-terminus, the 109-residue chain is Class I hydrophobin 7 (109 aa).

Positions 1–17 are cleaved as a signal peptide; the sequence is MFAQSFIITALAALAVA. Cystine bridges form between cysteine 28–cysteine 88, cysteine 35–cysteine 82, cysteine 36–cysteine 69, and cysteine 89–cysteine 102.

The protein belongs to the fungal hydrophobin family. Self-assembles to form functional amyloid fibrils called rodlets. Self-assembly into fibrillar rodlets occurs spontaneously at hydrophobic:hydrophilic interfaces and the rodlets further associate laterally to form amphipathic monolayers.

It localises to the secreted. Its subcellular location is the cell wall. Aerial growth, conidiation, and dispersal of filamentous fungi in the environment rely upon a capability of their secreting small amphipathic proteins called hydrophobins (HPBs) with low sequence identity. Class I can self-assemble into an outermost layer of rodlet bundles on aerial cell surfaces, conferring cellular hydrophobicity that supports fungal growth, development and dispersal; whereas Class II form highly ordered films at water-air interfaces through intermolecular interactions but contribute nothing to the rodlet structure. Hydph7 is a class I hydrophobin involved in fruiting body development. This chain is Class I hydrophobin 7, found in Pleurotus ostreatus (strain PC15) (Oyster mushroom).